Here is a 331-residue protein sequence, read N- to C-terminus: Ketol-acid reductoisomerase (NADP(+)) (331 aa).

Residues 4–183 (ATIYYDDDAE…GCTRAGVVET (180 aa)) enclose the KARI N-terminal Rossmann domain. Residues 27 to 30 (YGSQ), arginine 50, serine 53, serine 55, and 85 to 88 (DTVQ) each bind NADP(+). Histidine 109 is an active-site residue. Glycine 135 contributes to the NADP(+) binding site. The 146-residue stretch at 184 to 329 (TFREETETDL…EDLRALFAWG (146 aa)) folds into the KARI C-terminal knotted domain. Positions 192, 196, 228, and 232 each coordinate Mg(2+). Residue serine 253 participates in substrate binding.

This sequence belongs to the ketol-acid reductoisomerase family. The cofactor is Mg(2+).

It carries out the reaction (2R)-2,3-dihydroxy-3-methylbutanoate + NADP(+) = (2S)-2-acetolactate + NADPH + H(+). The enzyme catalyses (2R,3R)-2,3-dihydroxy-3-methylpentanoate + NADP(+) = (S)-2-ethyl-2-hydroxy-3-oxobutanoate + NADPH + H(+). It functions in the pathway amino-acid biosynthesis; L-isoleucine biosynthesis; L-isoleucine from 2-oxobutanoate: step 2/4. The protein operates within amino-acid biosynthesis; L-valine biosynthesis; L-valine from pyruvate: step 2/4. Its function is as follows. Involved in the biosynthesis of branched-chain amino acids (BCAA). Catalyzes an alkyl-migration followed by a ketol-acid reduction of (S)-2-acetolactate (S2AL) to yield (R)-2,3-dihydroxy-isovalerate. In the isomerase reaction, S2AL is rearranged via a Mg-dependent methyl migration to produce 3-hydroxy-3-methyl-2-ketobutyrate (HMKB). In the reductase reaction, this 2-ketoacid undergoes a metal-dependent reduction by NADPH to yield (R)-2,3-dihydroxy-isovalerate. The sequence is that of Ketol-acid reductoisomerase (NADP(+)) from Natronomonas pharaonis (strain ATCC 35678 / DSM 2160 / CIP 103997 / JCM 8858 / NBRC 14720 / NCIMB 2260 / Gabara) (Halobacterium pharaonis).